The sequence spans 504 residues: Probable GTP-binding protein OBGC2 (504 aa).

Residues 24-39 (AHRDARPALRLPELHA) are compositionally biased toward basic and acidic residues. Disordered stretches follow at residues 24–46 (AHRD…RRNN) and 93–122 (VLAM…GVKK). The Obg domain maps to 73–276 (HKYFDHAVVT…VSLELILRVV (204 aa)). Over residues 107–122 (SPRRRSDKGKRSGVKK) the composition is skewed to basic residues. The OBG-type G domain maps to 277–494 (ADVGLVGLPN…MLKEIRAALR (218 aa)). GTP contacts are provided by residues 283 to 290 (GLPNAGKS) and 337 to 341 (DLPGL). Residues 436–452 (SEDSLNGNTGEHNTSSE) are compositionally biased toward polar residues. The tract at residues 436–463 (SEDSLNGNTGEHNTSSETKVEGGEKELR) is disordered. A compositionally biased stretch (basic and acidic residues) spans 453–463 (TKVEGGEKELR).

It belongs to the TRAFAC class OBG-HflX-like GTPase superfamily. OBG GTPase family.

Its function is as follows. May bind GTP and have GTPase activity. The sequence is that of Probable GTP-binding protein OBGC2 from Oryza sativa subsp. japonica (Rice).